Reading from the N-terminus, the 900-residue chain is DNA polymerase nu (900 aa).

Positions 60 to 75 (LEDRKTQSPEKKDLKS) are enriched in basic and acidic residues. Disordered regions lie at residues 60-90 (LEDR…LSPQ) and 863-900 (GPPP…SFCL). Residues 76–90 (LRSQTSRGSAKLSPQ) are compositionally biased toward polar residues.

Belongs to the DNA polymerase type-A family. Interacts with FANCD2, FANCI, PCNA, RAD51 and HELQ. As to expression, highly expressed in testis and heart. Weakly expressed in skeletal muscle.

Its subcellular location is the nucleus. The enzyme catalyses DNA(n) + a 2'-deoxyribonucleoside 5'-triphosphate = DNA(n+1) + diphosphate. Inhibited by ddTTP. In terms of biological role, DNA polymerase with very low fidelity that catalyzes considerable misincorporation by inserting dTTP opposite a G template, and dGTP opposite a T template. Is the least accurate of the DNA polymerase A family (i.e. POLG, POLN and POLQ). Can perform accurate translesion DNA synthesis (TLS) past a 5S-thymine glycol. Can perform efficient strand displacement past a nick or a gap and gives rise to an amount of product similar to that on non-damaged template. Has no exonuclease activity. Error-prone DNA polymerase that preferentially misincorporates dT regardless of template sequence. May play a role in TLS during interstrand cross-link (ICL) repair. May be involved in TLS when genomic replication is blocked by extremely large major groove DNA lesions. May function in the bypass of some DNA-protein and DNA-DNA cross-links. May have a role in cellular tolerance to DNA cross-linking agents. Involved in the repair of DNA cross-links and double-strand break (DSB) resistance. Participates in FANCD2-mediated repair. Forms a complex with HELQ helicase that participates in homologous recombination (HR) repair and is essential for cellular protection against DNA cross-links. This Homo sapiens (Human) protein is DNA polymerase nu (POLN).